The chain runs to 41 residues: Large ribosomal subunit protein bL36 (41 aa).

This sequence belongs to the bacterial ribosomal protein bL36 family.

The protein is Large ribosomal subunit protein bL36 of Rhodopseudomonas palustris (strain BisB5).